Consider the following 619-residue polypeptide: Schlafen family member 12-like (619 aa).

The chain crosses the membrane as a helical span at residues 598 to 618; that stretch reads IFLFVCLFRFCLFVCLFVFFL.

It belongs to the Schlafen family.

It is found in the membrane. This is Schlafen family member 12-like (SLFN12L) from Pongo abelii (Sumatran orangutan).